The following is a 285-amino-acid chain: Secreted LysM effector slp2 (285 aa).

Positions 1-16 (MLPITVVTLFAALAAA) are cleaved as a signal peptide. The segment at 75 to 143 (GDAAKAGDAA…KGGDAAKGGN (69 aa)) is disordered. Basic and acidic residues predominate over residues 85 to 116 (KGGDAKGGDAKGGDAKGGDAKGGKGGDAKGGK). Gly residues predominate over residues 117–139 (GGDAAKGGKGGDAAKGGKGGDAA). 2 LysM domains span residues 157 to 201 (VEHK…VLKI) and 237 to 281 (FTRV…TINL).

Belongs to the secreted LysM effector family.

Functionally, might have a role in sequestration of chitin oligosaccharides (breakdown products of fungal cell walls that are released during invasion and act as triggers of host immunity) to dampen host defense. The protein is Secreted LysM effector slp2 of Pyricularia oryzae (strain 70-15 / ATCC MYA-4617 / FGSC 8958) (Rice blast fungus).